A 351-amino-acid chain; its full sequence is Uroporphyrinogen decarboxylase (351 aa).

Substrate contacts are provided by residues 25-29 (RQAGR), Asp74, Tyr151, Ser206, and His325.

It belongs to the uroporphyrinogen decarboxylase family. Homodimer.

The protein localises to the cytoplasm. The catalysed reaction is uroporphyrinogen III + 4 H(+) = coproporphyrinogen III + 4 CO2. The protein operates within porphyrin-containing compound metabolism; protoporphyrin-IX biosynthesis; coproporphyrinogen-III from 5-aminolevulinate: step 4/4. Its function is as follows. Catalyzes the decarboxylation of four acetate groups of uroporphyrinogen-III to yield coproporphyrinogen-III. The polypeptide is Uroporphyrinogen decarboxylase (Chlorobium phaeovibrioides (strain DSM 265 / 1930) (Prosthecochloris vibrioformis (strain DSM 265))).